Consider the following 1512-residue polypeptide: Zinc finger protein 608 (1512 aa).

Disordered regions lie at residues 1–23 (MSVN…YDSG), 46–74 (QKFE…SGAG), 89–237 (QASA…HLYG), 260–295 (VAAA…HRRI), and 417–545 (RFCE…FLDQ). Low complexity-rich tracts occupy residues 51 to 74 (NNST…SGAG) and 151 to 185 (SALG…GSCG). Over residues 201–218 (AKRDKDAGKSRKDKHDLL) the composition is skewed to basic and acidic residues. Over residues 220 to 230 (GHQNGSGSQAP) the composition is skewed to polar residues. The segment covering 260–270 (VAAAGEVSKSA) has biased composition (low complexity). Residues 278–304 (NSMLVKKEEEEEESHRRIKKLKTEKVD) are a coiled coil. Lysine 283 participates in a covalent cross-link: Glycyl lysine isopeptide (Lys-Gly) (interchain with G-Cter in SUMO2). A phosphoserine mark is found at serine 421 and serine 424. A compositionally biased stretch (polar residues) spans 449 to 458 (ASFTESRGLQ). Threonine 481 is modified (phosphothreonine). A Phosphoserine modification is found at serine 493. Residues 526–535 (NSRSTPTTPQ) show a composition bias toward polar residues. Residues 553–578 (IDCPHPNCNKKYKHINGLRYHQAHAH) form a C2H2-type zinc finger. Disordered stretches follow at residues 622-665 (LKAP…KKKG), 713-750 (DKEK…PQLI), and 777-858 (QATP…KDHL). Serine 627 carries the post-translational modification Phosphoserine. A compositionally biased stretch (basic and acidic residues) spans 713-729 (DKEKGKKATNCKTDKNL). The span at 781 to 790 (KSPPLKPIQP) shows a compositional bias: pro residues. At serine 782 the chain carries Phosphoserine. Residues 818 to 858 (KLKDKEGKETGSPKMDAKLGKLEDSKGASKDLPGHFLKDHL) show a composition bias toward basic and acidic residues. A Glycyl lysine isopeptide (Lys-Gly) (interchain with G-Cter in SUMO2) cross-link involves residue lysine 880. A Phosphoserine modification is found at serine 895. Residues 925-934 (NGAESSAAKT) show a composition bias toward polar residues. Disordered regions lie at residues 925–996 (NGAE…HSPY) and 1011–1066 (PGQV…HQSV). The segment covering 960–973 (SKASSPSDIISSKD) has biased composition (low complexity). At serine 964 the chain carries Phosphoserine. A compositionally biased stretch (polar residues) spans 979-989 (HSSTTAQSSQL). A compositionally biased stretch (basic and acidic residues) spans 1030-1054 (IKKESEEDAEKKDKAEQLDSKKVDH). Over residues 1055–1066 (NSASLQPQHQSV) the composition is skewed to polar residues. A Phosphoserine modification is found at serine 1098. Residues 1117–1192 (QKMAQTGRGD…SQLLSNHQQQ (76 aa)) are disordered. Lysine 1118 participates in a covalent cross-link: Glycyl lysine isopeptide (Lys-Gly) (interchain with G-Cter in SUMO2). Over residues 1125–1145 (GDCERKSELPLKELGKEETKQ) the composition is skewed to basic and acidic residues. Residues 1146–1157 (KNMPSATISKAP) show a composition bias toward polar residues. Glycyl lysine isopeptide (Lys-Gly) (interchain with G-Cter in SUMO2) cross-links involve residues lysine 1176 and lysine 1182. Low complexity predominate over residues 1183–1192 (SQLLSNHQQQ). Glycyl lysine isopeptide (Lys-Gly) (interchain with G-Cter in SUMO2) cross-links involve residues lysine 1199, lysine 1216, lysine 1234, and lysine 1250. The disordered stretch occupies residues 1220 to 1335 (DSMKQTGVDP…RGTRVAVSSP (116 aa)). Residues 1231–1241 (SRFKQDPDSRT) are compositionally biased toward basic and acidic residues. Basic and acidic residues-rich tracts occupy residues 1253-1276 (DQQK…KTPN) and 1291-1327 (IKEE…DSRG). Residues lysine 1292, lysine 1310, and lysine 1414 each participate in a glycyl lysine isopeptide (Lys-Gly) (interchain with G-Cter in SUMO2) cross-link. The segment at 1423-1459 (ANQYRSKSPAPVEKATAEREREAERERDRHSPFGQRH) is disordered. A compositionally biased stretch (basic and acidic residues) spans 1437–1453 (ATAEREREAERERDRHS).

Transcription factor, which represses ZNF609 transcription. This is Zinc finger protein 608 (ZNF608) from Homo sapiens (Human).